The chain runs to 209 residues: Large ribosomal subunit protein bL25 (209 aa).

The interval 183 to 209 (TAGERPAAEPAAAPGAAPAAGPEEAEE) is disordered. Residues 184–209 (AGERPAAEPAAAPGAAPAAGPEEAEE) show a composition bias toward low complexity.

This sequence belongs to the bacterial ribosomal protein bL25 family. CTC subfamily. In terms of assembly, part of the 50S ribosomal subunit; part of the 5S rRNA/L5/L18/L25 subcomplex. Contacts the 5S rRNA. Binds to the 5S rRNA independently of L5 and L18.

Functionally, this is one of the proteins that binds to the 5S RNA in the ribosome where it forms part of the central protuberance. The sequence is that of Large ribosomal subunit protein bL25 from Pelotomaculum thermopropionicum (strain DSM 13744 / JCM 10971 / SI).